The primary structure comprises 207 residues: Ribosomal RNA small subunit methyltransferase G (207 aa).

S-adenosyl-L-methionine is bound by residues glycine 73, leucine 78, 124 to 125 (VE), and arginine 139.

Belongs to the methyltransferase superfamily. RNA methyltransferase RsmG family.

It localises to the cytoplasm. It catalyses the reaction guanosine(527) in 16S rRNA + S-adenosyl-L-methionine = N(7)-methylguanosine(527) in 16S rRNA + S-adenosyl-L-homocysteine. Its function is as follows. Specifically methylates the N7 position of guanine in position 527 of 16S rRNA. The sequence is that of Ribosomal RNA small subunit methyltransferase G from Salmonella agona (strain SL483).